The sequence spans 350 residues: Thioredoxin-like fold domain-containing protein MRL7L, chloroplastic (350 aa).

The transit peptide at 1–48 directs the protein to the chloroplast; it reads MILPFSTQFTCPVQDNGFSPSSLLSHCKRDRFEVTSLRYDSFGSVKTA. 2 disordered regions span residues 78–107 and 182–201; these read KKEE…LDDP and NEKK…DSEK. Composition is skewed to acidic residues over residues 82 to 93 and 186 to 200; these read DSDSEDEEDEVK and EEED…DDSE.

The protein localises to the plastid. It is found in the chloroplast stroma. It localises to the nucleus. Its function is as follows. Plays an essential role in early steps of chloroplast development. Involved in the regulation of plastid gene expression. Required for the proper function of the plastid transcriptional machinery and protein accumulation in thylakoid membranes. May function as molecular chaperone to ensure proper organization of the nucleoids in chloroplasts. Is a necessary component of phytochrome signaling for photosynthesis-associated plastid-encoded genes (PhAPGs) activation. Mediates the degradation of two repressors of chloroplast biogenesis, PIF1 and PIF3 in nucleus. Promotes the assembly of the plastid-encoded RNA polymerase (PEP) complex for PhAPG transcription in plastids. In Arabidopsis thaliana (Mouse-ear cress), this protein is Thioredoxin-like fold domain-containing protein MRL7L, chloroplastic.